We begin with the raw amino-acid sequence, 666 residues long: Chaperone protein dnaK1 (666 aa).

Phosphothreonine; by autocatalysis is present on threonine 198.

This sequence belongs to the heat shock protein 70 family.

Functionally, acts as a chaperone. The sequence is that of Chaperone protein dnaK1 (dnaK1) from Prochlorococcus marinus (strain SARG / CCMP1375 / SS120).